The sequence spans 351 residues: UDP-3-O-acylglucosamine N-acyltransferase (351 aa).

Residue H240 is the Proton acceptor of the active site.

It belongs to the transferase hexapeptide repeat family. LpxD subfamily. As to quaternary structure, homotrimer.

It carries out the reaction a UDP-3-O-[(3R)-3-hydroxyacyl]-alpha-D-glucosamine + a (3R)-hydroxyacyl-[ACP] = a UDP-2-N,3-O-bis[(3R)-3-hydroxyacyl]-alpha-D-glucosamine + holo-[ACP] + H(+). It participates in bacterial outer membrane biogenesis; LPS lipid A biosynthesis. In terms of biological role, catalyzes the N-acylation of UDP-3-O-acylglucosamine using 3-hydroxyacyl-ACP as the acyl donor. Is involved in the biosynthesis of lipid A, a phosphorylated glycolipid that anchors the lipopolysaccharide to the outer membrane of the cell. The protein is UDP-3-O-acylglucosamine N-acyltransferase of Pseudomonas syringae pv. tomato (strain ATCC BAA-871 / DC3000).